Consider the following 179-residue polypeptide: Cell division protein ZapC (179 aa).

The protein belongs to the ZapC family. As to quaternary structure, interacts directly with FtsZ.

The protein localises to the cytoplasm. Functionally, contributes to the efficiency of the cell division process by stabilizing the polymeric form of the cell division protein FtsZ. Acts by promoting interactions between FtsZ protofilaments and suppressing the GTPase activity of FtsZ. This chain is Cell division protein ZapC, found in Ferrimonas balearica (strain DSM 9799 / CCM 4581 / KCTC 23876 / PAT).